We begin with the raw amino-acid sequence, 475 residues long: Mitochondrial adenyl nucleotide antiporter SLC25A24 (475 aa).

Positions 1–173 are regulatory N-terminal domain; sequence MLRWLRAFVL…RFWKHSTGID (173 aa). Residues 1-197 are Mitochondrial intermembrane-facing; the sequence is MLRWLRAFVL…EKKSGQWWRQ (197 aa). EF-hand domains lie at 19–54, 55–88, 86–121, and 122–157; these read EPPT…LGIP, LGQD…KDHE, DHEK…LGLH, and ISEK…NPVT. Ca(2+) contacts are provided by aspartate 32, asparagine 34, aspartate 36, valine 38, glutamate 43, aspartate 68, asparagine 70, aspartate 72, lysine 74, glutamate 79, aspartate 99, asparagine 101, aspartate 103, lysine 105, glutamate 110, aspartate 135, aspartate 137, threonine 139, threonine 141, and glutamate 146. The interval 159–168 is linker region; sequence IEEIIRFWKH. Residues 174-475 form a C-terminal transmembrane transporter domain region; sequence IGDSLTIPDE…MKQTLGVAQK (302 aa). Solcar repeat units lie at residues 192-276, 284-369, and 381-469; these read GQWW…YKKL, LGTF…LKSY, and PGVM…MKQT. The helical transmembrane segment at 198 to 215 threads the bilayer; the sequence is LLAGGVAGAVSRTSTAPL. Residues 216–250 are Mitochondrial matrix-facing; it reads DRLKVMMQVHGSKSMNIFGGFRQMVKEGGIRSLWR. A helical transmembrane segment spans residues 251-270; it reads GNGTNVIKIAPETAVKFWAY. At 271–293 the chain is on the mitochondrial intermembrane side; sequence EQYKKLLTEEGQKLGTFERFISG. The chain crosses the membrane as a helical span at residues 294-307; sequence SMAGATAQTFIYPM. The Mitochondrial matrix portion of the chain corresponds to 308-343; it reads EVLKTRLAVAKTGQYSGIYGCAKKILKHEGFGAFYK. Lysine 318 carries the post-translational modification N6-acetyllysine; alternate. Lysine 318 carries the N6-succinyllysine; alternate modification. Lysine 334 is subject to N6-acetyllysine. A helical transmembrane segment spans residues 344-363; sequence GYIPNLLGIIPYAGIDLAVY. Topologically, residues 364-386 are mitochondrial intermembrane; it reads ELLKSYWLDNFAKDSVNPGVMVL. The chain crosses the membrane as a helical span at residues 387-404; that stretch reads LSCGALSSTCGQLASYPL. Over 405-443 the chain is Mitochondrial matrix; the sequence is ALVRTRMQAQATVEGAPQLSMVGLFQRIVSKEGVSGLYR. Lysine 435 carries the N6-acetyllysine; alternate modification. N6-succinyllysine; alternate is present on lysine 435. Residues 444 to 463 traverse the membrane as a helical segment; that stretch reads GITPNFMKVLPAVGISYVVY. Residues 464–475 are Mitochondrial intermembrane-facing; that stretch reads ENMKQTLGVAQK.

The protein belongs to the mitochondrial carrier (TC 2.A.29) family. As to quaternary structure, monomer.

It is found in the mitochondrion inner membrane. It catalyses the reaction Mg(2+)(out) + phosphate(in) + ATP(out) = Mg(2+)(in) + phosphate(out) + ATP(in). The enzyme catalyses ADP(out) + phosphate(in) + H(+)(out) = ADP(in) + phosphate(out) + H(+)(in). The catalysed reaction is AMP(out) + phosphate(in) = AMP(in) + phosphate(out). It carries out the reaction phosphate(in) + ATP(out) + 2 H(+)(out) = phosphate(out) + ATP(in) + 2 H(+)(in). It catalyses the reaction dADP(in) + ADP(out) = dADP(out) + ADP(in). The enzyme catalyses Mg(2+)(in) + ADP(out) + ATP(in) + H(+)(out) = Mg(2+)(out) + ADP(in) + ATP(out) + H(+)(in). The catalysed reaction is ADP(out) + diphosphate(in) = ADP(in) + diphosphate(out). It carries out the reaction dAMP(in) + ADP(out) + H(+)(out) = dAMP(out) + ADP(in) + H(+)(in). It catalyses the reaction 3'-AMP(in) + ADP(out) + H(+)(out) = 3'-AMP(out) + ADP(in) + H(+)(in). The enzyme catalyses dAMP(out) + phosphate(in) = dAMP(in) + phosphate(out). The catalysed reaction is 3'-AMP(out) + phosphate(in) = 3'-AMP(in) + phosphate(out). It carries out the reaction dADP(out) + phosphate(in) + H(+)(out) = dADP(in) + phosphate(out) + H(+)(in). Its activity is regulated as follows. Activated by an increase in cytosolic calcium levels that induce a conformational change of the N-terminal regulatory domain, uncapping the channel and allowing transport. Inhibited by bathophenanthroline, mersalyl, p-hydroxymercuribenzoate, bromcresol purple and tannic acid. In terms of biological role, electroneutral antiporter that mediates the transport of adenyl nucleotides through the inner mitochondrial membrane. Originally identified as an ATP-magnesium/inorganic phosphate antiporter, it also acts as a broad specificity adenyl nucleotide antiporter. By regulating the mitochondrial matrix adenyl nucleotide pool could adapt to changing cellular energetic demands and indirectly regulate adenyl nucleotide-dependent metabolic pathways. In vitro, a low activity is also observed with guanyl and pyrimidine nucleotides. May play a role in protecting cells against oxidative stress-induced cell death, by buffering calcium levels in the mitochondrial matrix through the formation of calcium-phosphate precipitates. The sequence is that of Mitochondrial adenyl nucleotide antiporter SLC25A24 from Mus musculus (Mouse).